Consider the following 311-residue polypeptide: Cyclin-dependent kinase B1-2 (311 aa).

Positions Y4 to F303 constitute a Protein kinase domain. Residues V10–V18 and K33 contribute to the ATP site. Residue Y15 is modified to Phosphotyrosine. Residue D144 is the Proton acceptor of the active site. Residue T178 is modified to Phosphothreonine.

The protein belongs to the protein kinase superfamily. CMGC Ser/Thr protein kinase family. CDC2/CDKX subfamily. Interacts with CKS1. As to expression, expressed in flowers.

The catalysed reaction is L-seryl-[protein] + ATP = O-phospho-L-seryl-[protein] + ADP + H(+). The enzyme catalyses L-threonyl-[protein] + ATP = O-phospho-L-threonyl-[protein] + ADP + H(+). It carries out the reaction [DNA-directed RNA polymerase] + ATP = phospho-[DNA-directed RNA polymerase] + ADP + H(+). In terms of biological role, together with CDKB1-1, promotes both the last division in the stomatal cell lineage as well as the number of stomata. In collaboration with MYB124 and MYB88, restrict the G1/S transition and chloroplast and nuclear number during stomatal formation, and normally maintain fate and developmental progression throughout the stomatal cell lineage. The chain is Cyclin-dependent kinase B1-2 (CDKB1-2) from Arabidopsis thaliana (Mouse-ear cress).